We begin with the raw amino-acid sequence, 376 residues long: Putative F-box protein At2g33200 (376 aa).

Positions 6–53 (YDWSKLCHDILRLILESLHYKDYHRARTVCSNWYTASTTCKRPLYPWR) constitute an F-box domain.

The polypeptide is Putative F-box protein At2g33200 (Arabidopsis thaliana (Mouse-ear cress)).